A 526-amino-acid polypeptide reads, in one-letter code: Peptide chain release factor 3 (526 aa).

The 267-residue stretch at S11 to L277 folds into the tr-type G domain. Residues S20–T27, D88–H92, and N142–D145 contribute to the GTP site.

The protein belongs to the TRAFAC class translation factor GTPase superfamily. Classic translation factor GTPase family. PrfC subfamily.

The protein localises to the cytoplasm. Its function is as follows. Increases the formation of ribosomal termination complexes and stimulates activities of RF-1 and RF-2. It binds guanine nucleotides and has strong preference for UGA stop codons. It may interact directly with the ribosome. The stimulation of RF-1 and RF-2 is significantly reduced by GTP and GDP, but not by GMP. The chain is Peptide chain release factor 3 from Buchnera aphidicola subsp. Acyrthosiphon pisum (strain 5A).